The primary structure comprises 626 residues: Chaperone protein HtpG (626 aa).

The a; substrate-binding stretch occupies residues 1-331 (MSETVERHEF…TDDLPLNVSR (331 aa)). A b region spans residues 332 to 544 (EMLQSTPTLQ…GMGPDLQMQR (213 aa)). The tract at residues 545-626 (LLRRAGRGFG…GTAAKPAESA (82 aa)) is c.

Belongs to the heat shock protein 90 family. Homodimer.

The protein resides in the cytoplasm. Molecular chaperone. Has ATPase activity. The chain is Chaperone protein HtpG from Methylorubrum extorquens (strain PA1) (Methylobacterium extorquens).